Reading from the N-terminus, the 113-residue chain is MTDLYQQTCEVCRADAPRVPVDEAEVMLEEIPLWRIQQQEGVKQLARNFKFKNFIEALAFTNTVANLAEEEGHHPKLVLEWGSVEVVWWTHKIKGLHKNDFVMAAKTDKLYEG.

Belongs to the pterin-4-alpha-carbinolamine dehydratase family.

The catalysed reaction is (4aS,6R)-4a-hydroxy-L-erythro-5,6,7,8-tetrahydrobiopterin = (6R)-L-erythro-6,7-dihydrobiopterin + H2O. The chain is Putative pterin-4-alpha-carbinolamine dehydratase from Saccharophagus degradans (strain 2-40 / ATCC 43961 / DSM 17024).